The chain runs to 901 residues: Alanine--tRNA ligase (901 aa).

4 residues coordinate Zn(2+): His-581, His-585, Cys-684, and His-688.

This sequence belongs to the class-II aminoacyl-tRNA synthetase family. Requires Zn(2+) as cofactor.

Its subcellular location is the cytoplasm. The enzyme catalyses tRNA(Ala) + L-alanine + ATP = L-alanyl-tRNA(Ala) + AMP + diphosphate. Functionally, catalyzes the attachment of alanine to tRNA(Ala) in a two-step reaction: alanine is first activated by ATP to form Ala-AMP and then transferred to the acceptor end of tRNA(Ala). Also edits incorrectly charged Ser-tRNA(Ala) and Gly-tRNA(Ala) via its editing domain. The protein is Alanine--tRNA ligase of Mycobacterium ulcerans (strain Agy99).